The following is a 260-amino-acid chain: Pyridoxine 5'-phosphate synthase (260 aa).

Asparagine 15 is a binding site for 3-amino-2-oxopropyl phosphate. Aspartate 17–histidine 18 serves as a coordination point for 1-deoxy-D-xylulose 5-phosphate. Arginine 26 provides a ligand contact to 3-amino-2-oxopropyl phosphate. The Proton acceptor role is filled by histidine 51. Positions 53 and 58 each coordinate 1-deoxy-D-xylulose 5-phosphate. Catalysis depends on glutamate 78, which acts as the Proton acceptor. Residue threonine 108 coordinates 1-deoxy-D-xylulose 5-phosphate. The active-site Proton donor is the histidine 199. Residues glycine 200 and glycine 221 to histidine 222 each bind 3-amino-2-oxopropyl phosphate.

It belongs to the PNP synthase family. In terms of assembly, homooctamer; tetramer of dimers.

The protein resides in the cytoplasm. The catalysed reaction is 3-amino-2-oxopropyl phosphate + 1-deoxy-D-xylulose 5-phosphate = pyridoxine 5'-phosphate + phosphate + 2 H2O + H(+). The protein operates within cofactor biosynthesis; pyridoxine 5'-phosphate biosynthesis; pyridoxine 5'-phosphate from D-erythrose 4-phosphate: step 5/5. In terms of biological role, catalyzes the complicated ring closure reaction between the two acyclic compounds 1-deoxy-D-xylulose-5-phosphate (DXP) and 3-amino-2-oxopropyl phosphate (1-amino-acetone-3-phosphate or AAP) to form pyridoxine 5'-phosphate (PNP) and inorganic phosphate. The polypeptide is Pyridoxine 5'-phosphate synthase (Cupriavidus pinatubonensis (strain JMP 134 / LMG 1197) (Cupriavidus necator (strain JMP 134))).